Reading from the N-terminus, the 199-residue chain is Recombination protein RecR (199 aa).

The segment at 58 to 73 (CSVCTNLTDRDPCRIC) adopts a C4-type zinc-finger fold. A Toprim domain is found at 81 to 176 (AVICVVEEPR…KVTRIAHGLP (96 aa)).

It belongs to the RecR family.

Functionally, may play a role in DNA repair. It seems to be involved in an RecBC-independent recombinational process of DNA repair. It may act with RecF and RecO. This Heliobacterium modesticaldum (strain ATCC 51547 / Ice1) protein is Recombination protein RecR.